The chain runs to 25 residues: Caerin-1.18 (25 aa).

Leucine amide is present on Leu25.

As to expression, expressed by the skin dorsal glands.

Its subcellular location is the secreted. Its function is as follows. Shows significant activity against Gram-positive organisms, but is less effective against Gram-negative organisms. In Ranoidea gracilenta (Dainty green tree frog), this protein is Caerin-1.18.